The following is a 264-amino-acid chain: Major prion protein (264 aa).

Positions 1 to 24 (MVKSHIGSWILVLFVAMWSDVGLC) are cleaved as a signal peptide. The interaction with GRB2, ERI3 and SYN1 stretch occupies residues 25–241 (KKRPKPGGGW…ESQAYYQRGA (217 aa)). The interval 28–119 (PKPGGGWNTG…WNKPSKPKTN (92 aa)) is disordered. A run of 6 repeats spans residues 54–62 (PQGGGGWGQ), 63–70 (PHGGGWGQ), 71–78 (PHGGGWGQ), 79–86 (PHGGGWGQ), 87–94 (PHGGGWGQ), and 95–103 (PHGGGGWGQ). The segment at 54-103 (PQGGGGWGQPHGGGWGQPHGGGWGQPHGGGWGQPHGGGWGQPHGGGGWGQ) is 6 X 8 AA tandem repeats of P-H-G-G-G-W-G-Q. Over residues 55-105 (QGGGGWGQPHGGGWGQPHGGGWGQPHGGGWGQPHGGGWGQPHGGGGWGQGG) the composition is skewed to gly residues. Positions 72, 73, 74, 80, 81, 82, 88, 89, 90, 96, 98, and 99 each coordinate Cu(2+). C190 and C225 are oxidised to a cystine. 2 N-linked (GlcNAc...) asparagine glycosylation sites follow: N192 and N208. Residue A241 is the site of GPI-anchor amidated alanine attachment. Residues 242–264 (SVILFSSPPVILLISFLIFLIVG) constitute a propeptide, removed in mature form.

This sequence belongs to the prion family. As to quaternary structure, monomer and homodimer. Has a tendency to aggregate into amyloid fibrils containing a cross-beta spine, formed by a steric zipper of superposed beta-strands. Soluble oligomers may represent an intermediate stage on the path to fibril formation. Copper binding may promote oligomerization. Interacts with GRB2, APP, ERI3/PRNPIP and SYN1. Mislocalized cytosolically exposed PrP interacts with MGRN1; this interaction alters MGRN1 subcellular location and causes lysosomal enlargement. Interacts with KIAA1191.

It localises to the cell membrane. It is found in the golgi apparatus. Its primary physiological function is unclear. Has cytoprotective activity against internal or environmental stresses. May play a role in neuronal development and synaptic plasticity. May be required for neuronal myelin sheath maintenance. May play a role in iron uptake and iron homeostasis. Soluble oligomers are toxic to cultured neuroblastoma cells and induce apoptosis (in vitro). Association with GPC1 (via its heparan sulfate chains) targets PRNP to lipid rafts. Also provides Cu(2+) or Zn(2+) for the ascorbate-mediated GPC1 deaminase degradation of its heparan sulfate side chains. The polypeptide is Major prion protein (PRNP) (Antilope cervicapra (Blackbuck)).